Reading from the N-terminus, the 250-residue chain is Ino eighty subunit 3 (250 aa).

Positions proline 29–histidine 70 are disordered. A compositionally biased stretch (low complexity) spans serine 52–histidine 70. Phosphoserine is present on residues serine 157 and serine 211.

As to quaternary structure, component of the chromatin-remodeling INO80 complex, at least composed of ARP4, ARP5, ARP8, RVB1, RVB2, TAF14, NHP10, IES1, IES3, IES4, IES6, ACT1, IES2, IES5 and INO80.

Its subcellular location is the nucleus. Functionally, probably involved in transcription regulation via its interaction with the INO80 complex, a chromatin-remodeling complex. The polypeptide is Ino eighty subunit 3 (IES3) (Saccharomyces cerevisiae (strain ATCC 204508 / S288c) (Baker's yeast)).